A 293-amino-acid polypeptide reads, in one-letter code: RNA-binding Raly-like protein (293 aa).

Residues 21–92 (SRVFIGNLNT…QPLDINMAGE (72 aa)) form the RRM domain. Disordered stretches follow at residues 159 to 195 (PRAA…KLKS) and 245 to 293 (QDEC…LQIK). Residues 176–192 (KGGSRSAVSGSSSSGSK) show a composition bias toward low complexity. A coiled-coil region spans residues 192–254 (KLKSDELQTI…QDECVSENAD (63 aa)). Acidic residues predominate over residues 259-284 (EPAEGAPDADGEELTDGVEEDFDEDG).

It belongs to the RRM HNRPC family. RALY subfamily.

This chain is RNA-binding Raly-like protein (RALYL), found in Bos taurus (Bovine).